Here is a 122-residue protein sequence, read N- to C-terminus: MGNLIKELQDEQLRKEDLEDFRVGDTIRVATKIVDGGKERTQVFQGTVMARRGGGAGETVCLHRVAYGEGMEKSFLLHSPKIVGIEVVKRGKVSRARLYYLKGKTGKAAKVKEYIGPRSSKK.

The protein belongs to the bacterial ribosomal protein bL19 family.

In terms of biological role, this protein is located at the 30S-50S ribosomal subunit interface and may play a role in the structure and function of the aminoacyl-tRNA binding site. This is Large ribosomal subunit protein bL19 from Chlamydia felis (strain Fe/C-56) (Chlamydophila felis).